We begin with the raw amino-acid sequence, 458 residues long: Argininosuccinate lyase (458 aa).

This sequence belongs to the lyase 1 family. Argininosuccinate lyase subfamily.

The protein resides in the cytoplasm. The enzyme catalyses 2-(N(omega)-L-arginino)succinate = fumarate + L-arginine. It participates in amino-acid biosynthesis; L-arginine biosynthesis; L-arginine from L-ornithine and carbamoyl phosphate: step 3/3. This Bacillus velezensis (strain DSM 23117 / BGSC 10A6 / LMG 26770 / FZB42) (Bacillus amyloliquefaciens subsp. plantarum) protein is Argininosuccinate lyase.